The chain runs to 545 residues: Propane 2-monooxygenase, hydroxylase component large subunit (545 aa).

The Fe cation site is built by glutamate 97, glutamate 127, histidine 130, glutamate 192, glutamate 226, and histidine 229.

This sequence belongs to the TmoA/XamoA family. The propane 2-monooxygenase multicomponent enzyme system is composed of an electron transfer component and a monooxygenase component interacting with the effector protein PrmD. The electron transfer component is composed of a reductase (PrmB), and the monooxygenase component is formed by a large subunit (PrmA) and a small subunit (PrmC). Probably requires the presence of the chaperonin-like protein PrmG to ensure a productive folding, resulting of a soluble PrmA, which leads to the active form of PrmABCD. Fe(2+) is required as a cofactor.

It catalyses the reaction propane + NADH + O2 + H(+) = propan-2-ol + NAD(+) + H2O. The enzyme catalyses phenol + NADH + O2 + H(+) = hydroquinone + NAD(+) + H2O. Its function is as follows. Component of the propane 2-monooxygenase multicomponent enzyme system which is involved in the degradation of propane via the O2-dependent hydroxylation of propane. Under acetone induction, also able to catalyze the oxidation of phenol to yield hydroquinone. The polypeptide is Propane 2-monooxygenase, hydroxylase component large subunit (Gordonia sp. (strain TY-5)).